Reading from the N-terminus, the 430-residue chain is Enolase (430 aa).

Glutamine 163 is a (2R)-2-phosphoglycerate binding site. The Proton donor role is filled by glutamate 205. Aspartate 242, glutamate 287, and aspartate 314 together coordinate Mg(2+). Positions 339, 368, 369, and 390 each coordinate (2R)-2-phosphoglycerate. Catalysis depends on lysine 339, which acts as the Proton acceptor.

This sequence belongs to the enolase family. The cofactor is Mg(2+).

The protein resides in the cytoplasm. It is found in the secreted. It localises to the cell surface. The catalysed reaction is (2R)-2-phosphoglycerate = phosphoenolpyruvate + H2O. The protein operates within carbohydrate degradation; glycolysis; pyruvate from D-glyceraldehyde 3-phosphate: step 4/5. Functionally, catalyzes the reversible conversion of 2-phosphoglycerate (2-PG) into phosphoenolpyruvate (PEP). It is essential for the degradation of carbohydrates via glycolysis. In Geobacillus sp. (strain WCH70), this protein is Enolase.